The sequence spans 224 residues: UPF0758 protein CJA_3522 (224 aa).

The MPN domain maps to 102–224 (LLSSPHLVRD…LVSLAERGWL (123 aa)). Zn(2+) is bound by residues histidine 173, histidine 175, and aspartate 186. Residues 173–186 (HNHPSGLAEPSQAD) carry the JAMM motif motif.

Belongs to the UPF0758 family.

This chain is UPF0758 protein CJA_3522, found in Cellvibrio japonicus (strain Ueda107) (Pseudomonas fluorescens subsp. cellulosa).